The sequence spans 32 residues: Dermatoxin-J1 (32 aa).

Gln-32 carries the post-translational modification Glutamine amide.

In terms of tissue distribution, expressed by the skin glands.

The protein resides in the secreted. Its function is as follows. Antimicrobial peptide. This chain is Dermatoxin-J1, found in Phasmahyla jandaia (Jandaia leaf frog).